The primary structure comprises 211 residues: Ras-related protein rab-11.1 (211 aa).

18–26 (GDSGVGKSN) contributes to the GTP binding site. Residues 40–48 (SKSTIGVEF) carry the Effector region motif. GTP is bound by residues 66 to 70 (DTAGQ), 124 to 127 (NKSD), and 154 to 156 (SAL). The interval 187 to 211 (GYGGGSGTIIPSPASDPPKKQCCIP) is disordered. 2 S-geranylgeranyl cysteine lipidation sites follow: cysteine 208 and cysteine 209.

It belongs to the small GTPase superfamily. Rab family. In terms of assembly, interacts with rei-1 and rei-2. The GDP-form preferentially binds to rei-1 and rei-2. Expressed weakly in sperm, but more predominantly in oocytes. Expressed in the intestine.

The protein localises to the cytoplasmic vesicle. The protein resides in the secretory vesicle. It is found in the endosome. Its subcellular location is the cytoplasm. It localises to the cytoskeleton. The protein localises to the spindle. The protein resides in the microtubule organizing center. It is found in the spindle pole body. Its subcellular location is the centrosome. It localises to the apical cell membrane. The protein localises to the cytosol. The protein resides in the recycling endosome membrane. It is found in the golgi apparatus membrane. Its subcellular location is the cytoplasmic granule. In terms of biological role, the small GTPases Rab are key regulators of intracellular membrane trafficking, from the formation of transport vesicles to their fusion with membranes. Rabs cycle between an inactive GDP-bound form and an active GTP-bound form that is able to recruit to membranes different set of downstream effectors directly responsible for vesicle formation, movement, tethering and fusion. Involved in regulating the meiotic maturation of oocytes. Plays a role in egg shell formation, regulating exocytosis of chondroitin proteoglycans following fertilization. Controls cortical granule localization and targets them to the plasma membrane for exocytosis. Acts as a major regulator of membrane delivery during cytokinesis. Regulates the cytoskeleton by facilitating astral microtubule elongation and organization during metaphase to ensure proper spindle alignment and polarity in the first embryonic cell division. Maintains normal endoplasmic reticulum morphology during metaphase. Involved in vesicle formation and plasma membrane repair following exposure to pore forming toxins. Regulates endocytic recycling. May play a role in yolk receptor endocytosis in growing oocytes. Plays a role in the shedding of pathogen spores from intestinal cells via its involvement in spore fusion and endocytic trafficking. This chain is Ras-related protein rab-11.1, found in Caenorhabditis elegans.